We begin with the raw amino-acid sequence, 135 residues long: Galectin-1 (135 aa).

At Ala2 the chain carries N-acetylalanine. The Galectin domain occupies 4 to 135 (GLVASNLNLK…DFKIKCVAFE (132 aa)). An N6-acetyllysine mark is found at Lys13, Lys19, and Lys29. Phosphoserine is present on Ser30. A beta-D-galactoside contacts are provided by residues 45-49 (HFNPR), His53, Asn62, and 69-72 (WGTE). Lys108 is modified (N6-acetyllysine; alternate). Residue Lys108 is modified to N6-succinyllysine; alternate. Position 128 is an N6-acetyllysine (Lys128).

As to quaternary structure, homodimer. Binds LGALS3BP. Interacts with CD2, CD3, CD4, CD6, CD7, CD43, ALCAM and CD45. Interacts with laminin (via poly-N-acetyllactosamine). Interacts with SUSD2. Interacts with cargo receptor TMED10; the interaction mediates the translocation from the cytoplasm into the ERGIC (endoplasmic reticulum-Golgi intermediate compartment) and thereby secretion. Interacts with CD69.

It localises to the secreted. It is found in the extracellular space. Its subcellular location is the extracellular matrix. The protein resides in the cytoplasm. Functionally, lectin that binds beta-galactoside and a wide array of complex carbohydrates. Plays a role in regulating apoptosis, cell proliferation and cell differentiation. Inhibits CD45 protein phosphatase activity and therefore the dephosphorylation of Lyn kinase. Strong inducer of T-cell apoptosis. Plays a negative role in Th17 cell differentiation via activation of the receptor CD69. The protein is Galectin-1 (Lgals1) of Rattus norvegicus (Rat).